Consider the following 143-residue polypeptide: Aspartate 1-decarboxylase (143 aa).

Catalysis depends on S25, which acts as the Schiff-base intermediate with substrate; via pyruvic acid. S25 is subject to Pyruvic acid (Ser). T57 contributes to the substrate binding site. Y58 serves as the catalytic Proton donor. 73 to 75 (GAA) contributes to the substrate binding site.

This sequence belongs to the PanD family. Heterooctamer of four alpha and four beta subunits. The cofactor is pyruvate. Post-translationally, is synthesized initially as an inactive proenzyme, which is activated by self-cleavage at a specific serine bond to produce a beta-subunit with a hydroxyl group at its C-terminus and an alpha-subunit with a pyruvoyl group at its N-terminus.

Its subcellular location is the cytoplasm. It carries out the reaction L-aspartate + H(+) = beta-alanine + CO2. Its pathway is cofactor biosynthesis; (R)-pantothenate biosynthesis; beta-alanine from L-aspartate: step 1/1. Its function is as follows. Catalyzes the pyruvoyl-dependent decarboxylation of aspartate to produce beta-alanine. The chain is Aspartate 1-decarboxylase from Mycobacterium ulcerans (strain Agy99).